The chain runs to 339 residues: DNA-directed RNA polymerase subunit alpha (339 aa).

The alpha N-terminal domain (alpha-NTD) stretch occupies residues 1 to 238; the sequence is MVDPIVTKNW…EQLSIFINFD (238 aa). An alpha C-terminal domain (alpha-CTD) region spans residues 255 to 339; the sequence is LNENLFRSVD…KAAPQGAPKV (85 aa).

It belongs to the RNA polymerase alpha chain family. In terms of assembly, homodimer. The RNAP catalytic core consists of 2 alpha, 1 beta, 1 beta' and 1 omega subunit. When a sigma factor is associated with the core the holoenzyme is formed, which can initiate transcription.

It carries out the reaction RNA(n) + a ribonucleoside 5'-triphosphate = RNA(n+1) + diphosphate. Its function is as follows. DNA-dependent RNA polymerase catalyzes the transcription of DNA into RNA using the four ribonucleoside triphosphates as substrates. The chain is DNA-directed RNA polymerase subunit alpha from Anaeromyxobacter sp. (strain Fw109-5).